Consider the following 357-residue polypeptide: Fructose-bisphosphate aldolase, cytoplasmic isozyme 1 (357 aa).

Substrate contacts are provided by Arg-52 and Lys-142. Glu-183 functions as the Proton acceptor in the catalytic mechanism. Lys-225 serves as the catalytic Schiff-base intermediate with dihydroxyacetone-P.

The protein belongs to the class I fructose-bisphosphate aldolase family.

It is found in the cytoplasm. The enzyme catalyses beta-D-fructose 1,6-bisphosphate = D-glyceraldehyde 3-phosphate + dihydroxyacetone phosphate. It functions in the pathway carbohydrate degradation; glycolysis; D-glyceraldehyde 3-phosphate and glycerone phosphate from D-glucose: step 4/4. The protein is Fructose-bisphosphate aldolase, cytoplasmic isozyme 1 of Pisum sativum (Garden pea).